A 167-amino-acid polypeptide reads, in one-letter code: Ubiquitin-conjugating enzyme E2 14 (167 aa).

A2 is subject to N-acetylalanine. Residues Q5 to E165 enclose the UBC core domain. C90 functions as the Glycyl thioester intermediate in the catalytic mechanism.

Belongs to the ubiquitin-conjugating enzyme family.

It carries out the reaction S-ubiquitinyl-[E1 ubiquitin-activating enzyme]-L-cysteine + [E2 ubiquitin-conjugating enzyme]-L-cysteine = [E1 ubiquitin-activating enzyme]-L-cysteine + S-ubiquitinyl-[E2 ubiquitin-conjugating enzyme]-L-cysteine.. Its pathway is protein modification; protein ubiquitination. In terms of biological role, accepts the ubiquitin from the E1 complex and catalyzes its covalent attachment to other proteins. Involved in the formation of multiubiquitin chains. Signal the protein for selective degradation. This is Ubiquitin-conjugating enzyme E2 14 (UBC14) from Arabidopsis thaliana (Mouse-ear cress).